Here is a 296-residue protein sequence, read N- to C-terminus: MLSWNNSWHSSSTENRTMEREIVASYEPKKNNEIRMFESSDEMATDLAEYISQVSEISIKERGYFAIALSGGPLISFMRKLCEAPYNKTLDWSKWYIFWADERAVAKNHVDSYYKSTKEDFLSKVPILNGHVYSINDNVTVEDAATDYEFVIRQLVKIRTVGVSESNDCPKFDLILLSIGSDGHVASLFPNHPALELKDDWVTYITDSPVPPPERITFTLPVINSASNIAVVATGEDKAKAVYFAISDGTEGPDAPSIPARMVQPTDGKLVWFLDKASASFLEAKTKNDGYEHPKY.

Belongs to the glucosamine/galactosamine-6-phosphate isomerase family. 6-phosphogluconolactonase subfamily.

It catalyses the reaction 6-phospho-D-glucono-1,5-lactone + H2O = 6-phospho-D-gluconate + H(+). The protein operates within carbohydrate degradation; pentose phosphate pathway; D-ribulose 5-phosphate from D-glucose 6-phosphate (oxidative stage): step 2/3. Its function is as follows. Hydrolysis of 6-phosphogluconolactone to 6-phosphogluconate. This chain is Probable 6-phosphogluconolactonase 1, found in Oryza sativa subsp. japonica (Rice).